The sequence spans 117 residues: DNA-directed RNA polymerase subunit omega (117 aa).

Residues 96 to 105 show a composition bias toward basic and acidic residues; the sequence is KEEAEEEAKQ. Residues 96–117 form a disordered region; it reads KEEAEEEAKQKNSRAAKAAAAE. Residues 108 to 117 are compositionally biased toward low complexity; it reads SRAAKAAAAE.

This sequence belongs to the RNA polymerase subunit omega family. As to quaternary structure, the RNAP catalytic core consists of 2 alpha, 1 beta, 1 beta' and 1 omega subunit. When a sigma factor is associated with the core the holoenzyme is formed, which can initiate transcription.

The catalysed reaction is RNA(n) + a ribonucleoside 5'-triphosphate = RNA(n+1) + diphosphate. Functionally, promotes RNA polymerase assembly. Latches the N- and C-terminal regions of the beta' subunit thereby facilitating its interaction with the beta and alpha subunits. This Lactococcus lactis subsp. cremoris (strain SK11) protein is DNA-directed RNA polymerase subunit omega.